The following is a 444-amino-acid chain: MLTRFAPSPTGYLHVGNIRTALICWMYTRNQNGKFLLRFDDTDLERSDIKYVDNIIEDLKWIGINWNSSFKQSERFERYNEVFLQLMKEGHIYACYETREELDTKRKLQLKQGFPPVYDKGALLLTEQEKIRYEQEGRKPHFRFKLDRNKTVKWNDEVKGEINIATIHISDPVVKREDGIYTYMLPSVIDDIDFNVTHVVRGEDHVTNTAVQIQMIQALKAKIPIFAHLPLLHFDDSKISKRKGGLDIKSIREDEIESMALTSYLAKLGTSDPIEAYIDMQSLIDSFDIKKFSSASLQFSLSEMYKLNSKVLQQMPFEMVQDRLSQIGSEFWYFIRSNIEKFSEVAKWWKICKFGIEPVVLNKEFIKIALSTLPQGDCNENTLSEWVKNIRQTIDIKAKDLFMQLRLALTGTETGPELAKLLIFIGRESIIARLEESQRIIQKV.

Residues 7–17 (PSPTGYLHVGN) carry the 'HIGH' region motif. Residues 238–242 (KISKR) carry the 'KMSKS' region motif. K241 serves as a coordination point for ATP.

Belongs to the class-I aminoacyl-tRNA synthetase family. Glutamate--tRNA ligase type 1 subfamily. Monomer.

It localises to the cytoplasm. The catalysed reaction is tRNA(Glu) + L-glutamate + ATP = L-glutamyl-tRNA(Glu) + AMP + diphosphate. Functionally, catalyzes the attachment of glutamate to tRNA(Glu) in a two-step reaction: glutamate is first activated by ATP to form Glu-AMP and then transferred to the acceptor end of tRNA(Glu). This chain is Glutamate--tRNA ligase 1, found in Wolbachia pipientis subsp. Culex pipiens (strain wPip).